Consider the following 721-residue polypeptide: Transcription activator of gluconeogenesis ARB_05058 (721 aa).

Polar residues predominate over residues 1-34; the sequence is MSPHQTTGQESDNMTVNGENAQASSQYIQSNEEM. The tract at residues 1 to 62 is disordered; it reads MSPHQTTGQE…PSRPKRKKAK (62 aa). Over residues 40–55 the composition is skewed to basic and acidic residues; it reads TEKKASTAKAAKDPSR. The zn(2)-C6 fungal-type DNA-binding region spans 65-93; the sequence is CYACQRGHLTCGDERPCQRCIKRGFQDAC. Disordered stretches follow at residues 128–224, 263–300, 353–400, 533–567, and 635–666; these read QNNA…FNSA, GDTP…SNQA, SPAS…TPQL, NHNV…YNSS, and GLNG…QRRW. Composition is skewed to polar residues over residues 133–213, 267–277, 287–300, and 361–379; these read GSNT…TPSA, PSESGAQRGSI, LTGS…SNQA, and MMTT…GAFN. 2 stretches are compositionally biased toward low complexity: residues 380-399 and 543-553; these read SRQN…STPQ and GLMTGSTSRGS. Residues 640 to 661 show a composition bias toward polar residues; the sequence is AASNETNELNGSLTNGATTNGR.

Belongs to the ERT1/acuK family.

Its subcellular location is the nucleus. Transcription factor which regulates nonfermentable carbon utilization. Activator of gluconeogenetic genes. The sequence is that of Transcription activator of gluconeogenesis ARB_05058 from Arthroderma benhamiae (strain ATCC MYA-4681 / CBS 112371) (Trichophyton mentagrophytes).